A 503-amino-acid chain; its full sequence is ATP synthase subunit alpha (503 aa).

170–177 provides a ligand contact to ATP; it reads GDKQTGKT.

It belongs to the ATPase alpha/beta chains family. In terms of assembly, F-type ATPases have 2 components, CF(1) - the catalytic core - and CF(0) - the membrane proton channel. CF(1) has five subunits: alpha(3), beta(3), gamma(1), delta(1), epsilon(1). CF(0) has three main subunits: a(1), b(2) and c(9-12). The alpha and beta chains form an alternating ring which encloses part of the gamma chain. CF(1) is attached to CF(0) by a central stalk formed by the gamma and epsilon chains, while a peripheral stalk is formed by the delta and b chains.

It localises to the cell inner membrane. It carries out the reaction ATP + H2O + 4 H(+)(in) = ADP + phosphate + 5 H(+)(out). Functionally, produces ATP from ADP in the presence of a proton gradient across the membrane. The alpha chain is a regulatory subunit. In Helicobacter pylori (strain HPAG1), this protein is ATP synthase subunit alpha.